Reading from the N-terminus, the 66-residue chain is Large ribosomal subunit protein uL29 (66 aa).

It belongs to the universal ribosomal protein uL29 family.

This Thermosipho melanesiensis (strain DSM 12029 / CIP 104789 / BI429) protein is Large ribosomal subunit protein uL29.